We begin with the raw amino-acid sequence, 129 residues long: Small ribosomal subunit protein uS11 (129 aa).

It belongs to the universal ribosomal protein uS11 family. Part of the 30S ribosomal subunit. Interacts with proteins S7 and S18. Binds to IF-3.

Located on the platform of the 30S subunit, it bridges several disparate RNA helices of the 16S rRNA. Forms part of the Shine-Dalgarno cleft in the 70S ribosome. This Oceanobacillus iheyensis (strain DSM 14371 / CIP 107618 / JCM 11309 / KCTC 3954 / HTE831) protein is Small ribosomal subunit protein uS11.